The chain runs to 138 residues: Transcription antitermination protein NusB (138 aa).

This sequence belongs to the NusB family.

Its function is as follows. Involved in transcription antitermination. Required for transcription of ribosomal RNA (rRNA) genes. Binds specifically to the boxA antiterminator sequence of the ribosomal RNA (rrn) operons. The polypeptide is Transcription antitermination protein NusB (Helicobacter pylori (strain Shi470)).